Consider the following 508-residue polypeptide: Photosystem II CP47 reaction center protein (508 aa).

Helical transmembrane passes span 21–36, 101–115, 140–156, 203–218, 237–252, and 457–472; these read SVHI…WAGS, IVFS…IWHW, GIHL…FGAF, IAAG…FHLS, VLSS…AFVV, and SFAL…HGSR.

Belongs to the PsbB/PsbC family. PsbB subfamily. As to quaternary structure, PSII is composed of 1 copy each of membrane proteins PsbA, PsbB, PsbC, PsbD, PsbE, PsbF, PsbH, PsbI, PsbJ, PsbK, PsbL, PsbM, PsbT, PsbX, PsbY, PsbZ, Psb30/Ycf12, at least 3 peripheral proteins of the oxygen-evolving complex and a large number of cofactors. It forms dimeric complexes. Binds multiple chlorophylls. PSII binds additional chlorophylls, carotenoids and specific lipids. serves as cofactor.

It is found in the plastid. The protein resides in the chloroplast thylakoid membrane. Its function is as follows. One of the components of the core complex of photosystem II (PSII). It binds chlorophyll and helps catalyze the primary light-induced photochemical processes of PSII. PSII is a light-driven water:plastoquinone oxidoreductase, using light energy to abstract electrons from H(2)O, generating O(2) and a proton gradient subsequently used for ATP formation. In Lobularia maritima (Sweet alyssum), this protein is Photosystem II CP47 reaction center protein.